Consider the following 329-residue polypeptide: GTP 3',8-cyclase (329 aa).

A Radical SAM core domain is found at Ala-8–Ala-234. Arg-17 contributes to the GTP binding site. Residues Cys-24 and Cys-28 each coordinate [4Fe-4S] cluster. S-adenosyl-L-methionine is bound at residue Tyr-30. Residue Cys-31 coordinates [4Fe-4S] cluster. Arg-68 is a GTP binding site. An S-adenosyl-L-methionine-binding site is contributed by Gly-72. Residue Thr-99 coordinates GTP. Residue Ser-123 coordinates S-adenosyl-L-methionine. A GTP-binding site is contributed by Lys-160. Met-194 is a binding site for S-adenosyl-L-methionine. 2 residues coordinate [4Fe-4S] cluster: Cys-257 and Cys-260. Arg-262–Arg-264 is a GTP binding site. Cys-274 contributes to the [4Fe-4S] cluster binding site.

This sequence belongs to the radical SAM superfamily. MoaA family. As to quaternary structure, monomer and homodimer. It depends on [4Fe-4S] cluster as a cofactor.

The catalysed reaction is GTP + AH2 + S-adenosyl-L-methionine = (8S)-3',8-cyclo-7,8-dihydroguanosine 5'-triphosphate + 5'-deoxyadenosine + L-methionine + A + H(+). Its pathway is cofactor biosynthesis; molybdopterin biosynthesis. Functionally, catalyzes the cyclization of GTP to (8S)-3',8-cyclo-7,8-dihydroguanosine 5'-triphosphate. The sequence is that of GTP 3',8-cyclase from Shigella dysenteriae serotype 1 (strain Sd197).